The chain runs to 242 residues: Biosynthetic peptidoglycan transglycosylase (242 aa).

Residues 19 to 39 (LMVVLAVFWGGGIALFSVAPV) traverse the membrane as a helical segment.

It belongs to the glycosyltransferase 51 family.

It localises to the cell inner membrane. It carries out the reaction [GlcNAc-(1-&gt;4)-Mur2Ac(oyl-L-Ala-gamma-D-Glu-L-Lys-D-Ala-D-Ala)](n)-di-trans,octa-cis-undecaprenyl diphosphate + beta-D-GlcNAc-(1-&gt;4)-Mur2Ac(oyl-L-Ala-gamma-D-Glu-L-Lys-D-Ala-D-Ala)-di-trans,octa-cis-undecaprenyl diphosphate = [GlcNAc-(1-&gt;4)-Mur2Ac(oyl-L-Ala-gamma-D-Glu-L-Lys-D-Ala-D-Ala)](n+1)-di-trans,octa-cis-undecaprenyl diphosphate + di-trans,octa-cis-undecaprenyl diphosphate + H(+). It participates in cell wall biogenesis; peptidoglycan biosynthesis. Functionally, peptidoglycan polymerase that catalyzes glycan chain elongation from lipid-linked precursors. This chain is Biosynthetic peptidoglycan transglycosylase, found in Escherichia coli O139:H28 (strain E24377A / ETEC).